The sequence spans 196 residues: Small ribosomal subunit protein uS5 (196 aa).

The S5 DRBM domain maps to 17-80; that stretch reads FEEKMLFVNR…AVARKNMITV (64 aa). Positions 164–196 are disordered; it reads GTEVRPSLSSDSPAGRSATTEAGEGVADTGGMQ. Residues 170-183 show a composition bias toward polar residues; sequence SLSSDSPAGRSATT.

The protein belongs to the universal ribosomal protein uS5 family. In terms of assembly, part of the 30S ribosomal subunit. Contacts proteins S4 and S8.

With S4 and S12 plays an important role in translational accuracy. In terms of biological role, located at the back of the 30S subunit body where it stabilizes the conformation of the head with respect to the body. This Deinococcus radiodurans (strain ATCC 13939 / DSM 20539 / JCM 16871 / CCUG 27074 / LMG 4051 / NBRC 15346 / NCIMB 9279 / VKM B-1422 / R1) protein is Small ribosomal subunit protein uS5.